Reading from the N-terminus, the 102-residue chain is uncharacterized protein (102 aa).

The tract at residues 1 to 41 is disordered; the sequence is MAAPRQIAFYGKGGTGKPKRKPEPVTASKEDRCLGSPSKNK.

The protein to the N-terminal of nitrogenase iron protein (NifH). Has lost the ATP-binding site.

Functionally, this protein is either not expressed, expressed at low levels or rapidly degraded. This is an uncharacterized protein from Rhizobium meliloti (Ensifer meliloti).